A 150-amino-acid polypeptide reads, in one-letter code: Ribosome maturation factor RimP (150 aa).

The protein belongs to the RimP family.

The protein localises to the cytoplasm. Its function is as follows. Required for maturation of 30S ribosomal subunits. The polypeptide is Ribosome maturation factor RimP (Salmonella dublin (strain CT_02021853)).